Reading from the N-terminus, the 289-residue chain is Pyridoxal kinase PdxY (289 aa).

Residues S9 and 44–45 (TQ) contribute to the substrate site. Residues D112, A144, E149, K183, and 210 to 213 (RPLV) each bind ATP. A substrate-binding site is contributed by D225.

This sequence belongs to the pyridoxine kinase family. PdxY subfamily. In terms of assembly, homodimer. Mg(2+) is required as a cofactor.

It catalyses the reaction pyridoxal + ATP = pyridoxal 5'-phosphate + ADP + H(+). It participates in cofactor metabolism; pyridoxal 5'-phosphate salvage; pyridoxal 5'-phosphate from pyridoxal: step 1/1. Its function is as follows. Pyridoxal kinase involved in the salvage pathway of pyridoxal 5'-phosphate (PLP). Catalyzes the phosphorylation of pyridoxal to PLP. The protein is Pyridoxal kinase PdxY of Proteus mirabilis.